Reading from the N-terminus, the 392-residue chain is Phosphoglycerate kinase (392 aa).

Substrate contacts are provided by residues 21 to 23 (DFN), Arg-36, 59 to 62 (HLGR), Arg-118, and Arg-151. Residues Lys-201, Gly-292, Glu-323, and 349 to 352 (GGDS) contribute to the ATP site.

Belongs to the phosphoglycerate kinase family. In terms of assembly, monomer.

The protein localises to the cytoplasm. The catalysed reaction is (2R)-3-phosphoglycerate + ATP = (2R)-3-phospho-glyceroyl phosphate + ADP. The protein operates within carbohydrate degradation; glycolysis; pyruvate from D-glyceraldehyde 3-phosphate: step 2/5. The sequence is that of Phosphoglycerate kinase from Borrelia hermsii (strain HS1 / DAH).